Consider the following 104-residue polypeptide: Large ribosomal subunit protein bL21 (104 aa).

Belongs to the bacterial ribosomal protein bL21 family. As to quaternary structure, part of the 50S ribosomal subunit. Contacts protein L20.

This protein binds to 23S rRNA in the presence of protein L20. The chain is Large ribosomal subunit protein bL21 from Opitutus terrae (strain DSM 11246 / JCM 15787 / PB90-1).